The following is a 336-amino-acid chain: Small ribosomal subunit protein uS2 (336 aa).

The protein belongs to the universal ribosomal protein uS2 family.

The protein is Small ribosomal subunit protein uS2 of Beijerinckia indica subsp. indica (strain ATCC 9039 / DSM 1715 / NCIMB 8712).